The primary structure comprises 598 residues: NADH-ubiquinone oxidoreductase chain 5 (598 aa).

The next 14 helical transmembrane spans lie at 6-26, 32-52, 84-100, 113-133, 136-156, 241-261, 272-292, 301-320, 325-347, 370-390, 409-429, 456-476, 478-498, and 576-596; these read LTLI…PPII, MILT…PLTI, YTVI…WSIM, MDKF…FISA, LLQL…LISW, TPVS…FLLI, LMLE…ALCA, IIAF…VGLN, AFLH…GSII, TTCM…AGFF, LMVT…LIIM, LAWG…PMKP, IFTM…ISLI, and LNSA…LSLT.

Belongs to the complex I subunit 5 family.

It is found in the mitochondrion inner membrane. The enzyme catalyses a ubiquinone + NADH + 5 H(+)(in) = a ubiquinol + NAD(+) + 4 H(+)(out). Core subunit of the mitochondrial membrane respiratory chain NADH dehydrogenase (Complex I) that is believed to belong to the minimal assembly required for catalysis. Complex I functions in the transfer of electrons from NADH to the respiratory chain. The immediate electron acceptor for the enzyme is believed to be ubiquinone. The chain is NADH-ubiquinone oxidoreductase chain 5 (MT-ND5) from Petromyzon marinus (Sea lamprey).